A 273-amino-acid polypeptide reads, in one-letter code: Glutamate racemase (273 aa).

Substrate contacts are provided by residues 10-11 (DS) and 42-43 (YG). Residue Cys73 is the Proton donor/acceptor of the active site. 74-75 (NT) provides a ligand contact to substrate. Residue Cys184 is the Proton donor/acceptor of the active site. 185 to 186 (TH) is a binding site for substrate.

The protein belongs to the aspartate/glutamate racemases family.

The catalysed reaction is L-glutamate = D-glutamate. It functions in the pathway cell wall biogenesis; peptidoglycan biosynthesis. Functionally, provides the (R)-glutamate required for cell wall biosynthesis. In Desulforudis audaxviator (strain MP104C), this protein is Glutamate racemase.